The following is a 114-amino-acid chain: Large ribosomal subunit protein uL18 (114 aa).

The protein belongs to the universal ribosomal protein uL18 family. In terms of assembly, part of the 50S ribosomal subunit; part of the 5S rRNA/L5/L18/L25 subcomplex. Contacts the 5S and 23S rRNAs.

Functionally, this is one of the proteins that bind and probably mediate the attachment of the 5S RNA into the large ribosomal subunit, where it forms part of the central protuberance. The sequence is that of Large ribosomal subunit protein uL18 from Bacteroides thetaiotaomicron (strain ATCC 29148 / DSM 2079 / JCM 5827 / CCUG 10774 / NCTC 10582 / VPI-5482 / E50).